Reading from the N-terminus, the 815-residue chain is Lon protease 1 (815 aa).

One can recognise a Lon N-terminal domain in the interval 19-212; the sequence is MPLLPLRDIV…KLFGQIRSEI (194 aa). An ATP-binding site is contributed by 364 to 371; sequence GPPGVGKT. Residues 601–782 enclose the Lon proteolytic domain; that stretch reads KDEIGLAVGL…DDVLRKAMVV (182 aa). Residues S688 and K731 contribute to the active site. A disordered region spans residues 793-815; it reads EAGAQQAVMFEQKPPAADEIRAH.

This sequence belongs to the peptidase S16 family. As to quaternary structure, homohexamer. Organized in a ring with a central cavity.

The protein localises to the cytoplasm. It catalyses the reaction Hydrolysis of proteins in presence of ATP.. Its function is as follows. ATP-dependent serine protease that mediates the selective degradation of mutant and abnormal proteins as well as certain short-lived regulatory proteins. Required for cellular homeostasis and for survival from DNA damage and developmental changes induced by stress. Degrades polypeptides processively to yield small peptide fragments that are 5 to 10 amino acids long. Binds to DNA in a double-stranded, site-specific manner. The sequence is that of Lon protease 1 from Syntrophobacter fumaroxidans (strain DSM 10017 / MPOB).